Reading from the N-terminus, the 487-residue chain is Histamine H1 receptor (487 aa).

Topologically, residues 1–29 (MSLPNSSCLLEDKMCEGNKTTMASPQLMP) are extracellular. N-linked (GlcNAc...) asparagine glycans are attached at residues Asn-5 and Asn-18. A helical transmembrane segment spans residues 30-50 (LVVVLSTICLVTVGLNLLVLY). Residues 51–64 (AVRSERKLHTVGNL) are Cytoplasmic-facing. The chain crosses the membrane as a helical span at residues 65 to 89 (YIVSLSVADLIVGAVVMPMNILYLL). Topologically, residues 90–97 (MSKWSLGR) are extracellular. The chain crosses the membrane as a helical span at residues 98–123 (PLCLFWLSMDYVASTASIFSVFILCI). Cys-100 and Cys-180 are disulfide-bonded. Asp-107 and Thr-112 together coordinate histamine. Positions 107–112 (DYVAST) are important for agonist binding. Residues 124 to 144 (DRYRSVQQPLRYLKYRTKTRA) lie on the Cytoplasmic side of the membrane. Residues Thr-140 and Thr-142 each carry the phosphothreonine modification. Residues 145–164 (SATILGAWFLSFLWVIPILG) traverse the membrane as a helical segment. Over 165-188 (WNHFMQQTSVRREDKCETDFYDVT) the chain is Extracellular. Residues 189–211 (WFKVMTAIINFYLPTLLMLWFYA) traverse the membrane as a helical segment. Asn-198 lines the histamine pocket. The Cytoplasmic segment spans residues 212 to 416 (KIYKAVRQHC…MNRERKAAKQ (205 aa)). Phosphoserine is present on Ser-230. Residues 238–261 (KLRPENPKGDAKKPGKESPWEVLK) are compositionally biased toward basic and acidic residues. The interval 238-292 (KLRPENPKGDAKKPGKESPWEVLKRKPKDAGGGSVLKSPSQTXKEMKSPVVFSQE) is disordered. Thr-279 is modified (phosphothreonine). Residues Ser-344 and Ser-347 each carry the phosphoserine modification. The disordered stretch occupies residues 345 to 379 (EISEDQMLGDSQSFSRTDSDTTTETAPGKGKLRSG). Residues 353 to 369 (GDSQSFSRTDSDTTTET) show a composition bias toward polar residues. 3 positions are modified to phosphoserine: Ser-380, Ser-396, and Ser-398. A helical membrane pass occupies residues 417 to 440 (LGFIMAAFILCWIPYFIFFMVIAF). Residues 424–428 (FILCW) are important for agonist binding. A histamine-binding site is contributed by Tyr-431. Residues Cys-441 and Cys-444 are joined by a disulfide bond. The Extracellular segment spans residues 441–446 (CKNCCN). The helical transmembrane segment at 447–469 (EHLHMFTIWLGYINSTLNPLIYP) threads the bilayer. Topologically, residues 470-487 (LCNENFKKTFKRILHIRS) are cytoplasmic.

It belongs to the G-protein coupled receptor 1 family. In terms of processing, phosphorylation at sites in the second and third cytoplasmic loops independently contribute to agonist-induced receptor down-regulation.

It is found in the cell membrane. Its function is as follows. G-protein-coupled receptor for histamine, a biogenic amine that functions as an immune modulator and a neurotransmitter. Through the H1 receptor, histamine mediates the contraction of smooth muscles and increases capillary permeability due to contraction of terminal venules. Also mediates neurotransmission in the central nervous system and thereby regulates circadian rhythms, emotional and locomotor activities as well as cognitive functions. The protein is Histamine H1 receptor of Pan troglodytes (Chimpanzee).